Consider the following 188-residue polypeptide: Elongation factor P (188 aa).

It belongs to the elongation factor P family.

Its subcellular location is the cytoplasm. It participates in protein biosynthesis; polypeptide chain elongation. Functionally, involved in peptide bond synthesis. Stimulates efficient translation and peptide-bond synthesis on native or reconstituted 70S ribosomes in vitro. Probably functions indirectly by altering the affinity of the ribosome for aminoacyl-tRNA, thus increasing their reactivity as acceptors for peptidyl transferase. This chain is Elongation factor P, found in Exiguobacterium sp. (strain ATCC BAA-1283 / AT1b).